The sequence spans 326 residues: Vitamin B12 import system permease protein BtuC (326 aa).

The next 9 membrane-spanning stretches (helical) occupy residues 15–35 (WLLC…CAGE), 61–81 (LAVL…QALF), 88–108 (PGLL…VLLG), 112–132 (LPNW…TLIL), 146–166 (LLAG…AIYF), 184–204 (GGVD…LLWI), 240–260 (GWMV…GLVI), 274–294 (VLLP…DIVA), and 302–322 (ELPI…WLLL).

Belongs to the binding-protein-dependent transport system permease family. FecCD subfamily. As to quaternary structure, the complex is composed of two ATP-binding proteins (BtuD), two transmembrane proteins (BtuC) and a solute-binding protein (BtuF).

The protein resides in the cell inner membrane. Functionally, part of the ABC transporter complex BtuCDF involved in vitamin B12 import. Involved in the translocation of the substrate across the membrane. The protein is Vitamin B12 import system permease protein BtuC of Shigella sonnei (strain Ss046).